The chain runs to 402 residues: Advanced glycosylation end product-specific receptor (402 aa).

A signal peptide spans 1-22; sequence MPTGTVARAWVLVLALWGAVAG. Residues 23–109 enclose the Ig-like V-type domain; it reads GQNITARIGE…ATNRLGKEVK (87 aa). The Extracellular segment spans residues 23-341; that stretch reads GQNITARIGE…DGSGLGTLAL (319 aa). N-linked (GlcNAc...) asparagine glycans are attached at residues Asn-25 and Asn-80. 2 disulfide bridges follow: Cys-38/Cys-98 and Cys-143/Cys-206. Ig-like C2-type domains follow at residues 123-219 and 233-315; these read PEIV…RPLN and PEGI…PPVN. Residues 342–362 form a helical membrane-spanning segment; the sequence is ALGILGGLGIAALLIGAILWR. The Cytoplasmic segment spans residues 363-402; it reads KRQPRLEERKAPESQEDEEERAELNQSEEAEMPENGAGGP. Positions 368-402 are disordered; it reads LEERKAPESQEDEEERAELNQSEEAEMPENGAGGP. Phosphoserine occurs at positions 376 and 389. The segment covering 376–394 has biased composition (acidic residues); sequence SQEDEEERAELNQSEEAEM.

In terms of assembly, constitutive homodimer; disulfide-linked. Forms homooligomers. Interacts with S100A1 and APP. Interacts with S100B, S100A12 and S100A14. Interacts with TIRAP. Interacts with HMGB1. Interacts with LGP2; this interaction plays an important role in AGER-mediated pro-inflammatory responses and cytokine release. Interacts with double-strand break repair protein MRE11 which is a core component of the MRN complex; the interaction enhances MRE11 endonuclease activity and promotes DNA repair. Interacts with the MCM2-7 complex via interaction with complex member MCM2; the interaction is increased following DNA replication stress and stabilizes the MCM2-7 complex at replication forks. Phosphorylated on its cytoplasmic domain by PKCzeta/PRKCZ upon ligand binding. Phosphorylated by ATM following DNA damage. Post-translationally, targeted by the ubiquitin E3 ligase subunit FBXO10 to mediate its ubiquitination and degradation. As to expression, endothelial cells and cardiomyocytes. Expressed in brain.

It is found in the cell membrane. Its subcellular location is the cell projection. The protein resides in the phagocytic cup. The protein localises to the early endosome. It localises to the nucleus. In terms of biological role, cell surface pattern recognition receptor that senses endogenous stress signals with a broad ligand repertoire including advanced glycation end products, S100 proteins, high-mobility group box 1 protein/HMGB1, amyloid beta/APP oligomers, nucleic acids, histones, phospholipids and glycosaminoglycans. Advanced glycosylation end products are nonenzymatically glycosylated proteins which accumulate in vascular tissue in aging and at an accelerated rate in diabetes. These ligands accumulate at inflammatory sites during the pathogenesis of various diseases including diabetes, vascular complications, neurodegenerative disorders and cancers, and RAGE transduces their binding into pro-inflammatory responses. Upon ligand binding, uses TIRAP and MYD88 as adapters to transduce the signal ultimately leading to the induction of inflammatory cytokines IL6, IL8 and TNFalpha through activation of NF-kappa-B. Interaction with S100A12 on endothelium, mononuclear phagocytes, and lymphocytes triggers cellular activation, with generation of key pro-inflammatory mediators. Interaction with S100B after myocardial infarction may play a role in myocyte apoptosis by activating ERK1/2 and p53/TP53 signaling. Contributes to the translocation of amyloid-beta peptide (ABPP) across the cell membrane from the extracellular to the intracellular space in cortical neurons. ABPP-initiated RAGE signaling, especially stimulation of p38 mitogen-activated protein kinase (MAPK), has the capacity to drive a transport system delivering ABPP as a complex with RAGE to the intraneuronal space. Participates in endothelial albumin transcytosis together with HMGB1 through the RAGE/SRC/Caveolin-1 pathway, leading to endothelial hyperpermeability. Mediates the loading of HMGB1 in extracellular vesicles (EVs) that shuttle HMGB1 to hepatocytes by transferrin-mediated endocytosis and subsequently promote hepatocyte pyroptosis by activating the NLRP3 inflammasome. Binds to DNA and promotes extracellular hypomethylated DNA (CpG DNA) uptake by cells via the endosomal route to activate inflammatory responses. Mediates phagocytosis by non-professional phagocytes (NPP) and this is enhanced by binding to ligands including RNA, DNA, HMGB1 and histones. Promotes NPP-mediated phagocytosis of Saccharomyces cerevisiae spores by binding to RNA attached to the spore wall. Also promotes NPP-mediated phagocytosis of apoptotic cells. Following DNA damage, recruited to DNA double-strand break sites where it colocalizes with the MRN repair complex via interaction with double-strand break repair protein MRE11. Enhances the endonuclease activity of MRE11, promoting the end resection of damaged DNA. Promotes DNA damage repair in trophoblasts which enhances trophoblast invasion and contributes to placental development and maintenance. Protects cells from DNA replication stress by localizing to damaged replication forks where it stabilizes the MCM2-7 complex and promotes faithful progression of the replication fork. This Rattus norvegicus (Rat) protein is Advanced glycosylation end product-specific receptor (Ager).